Here is a 280-residue protein sequence, read N- to C-terminus: Ribosomal RNA small subunit methyltransferase A (280 aa).

S-adenosyl-L-methionine contacts are provided by histidine 13, leucine 15, glycine 40, glutamate 61, aspartate 85, and asparagine 106. Residues 258–280 (RPPADVEDANAPHTEQGKGDNSQ) form a disordered region.

It belongs to the class I-like SAM-binding methyltransferase superfamily. rRNA adenine N(6)-methyltransferase family. RsmA subfamily.

It is found in the cytoplasm. The catalysed reaction is adenosine(1518)/adenosine(1519) in 16S rRNA + 4 S-adenosyl-L-methionine = N(6)-dimethyladenosine(1518)/N(6)-dimethyladenosine(1519) in 16S rRNA + 4 S-adenosyl-L-homocysteine + 4 H(+). In terms of biological role, specifically dimethylates two adjacent adenosines (A1518 and A1519) in the loop of a conserved hairpin near the 3'-end of 16S rRNA in the 30S particle. May play a critical role in biogenesis of 30S subunits. This Alcanivorax borkumensis (strain ATCC 700651 / DSM 11573 / NCIMB 13689 / SK2) protein is Ribosomal RNA small subunit methyltransferase A.